The sequence spans 357 residues: Phosphoribosylformylglycinamidine cyclo-ligase (357 aa).

It belongs to the AIR synthase family.

The protein resides in the cytoplasm. It carries out the reaction 2-formamido-N(1)-(5-O-phospho-beta-D-ribosyl)acetamidine + ATP = 5-amino-1-(5-phospho-beta-D-ribosyl)imidazole + ADP + phosphate + H(+). It participates in purine metabolism; IMP biosynthesis via de novo pathway; 5-amino-1-(5-phospho-D-ribosyl)imidazole from N(2)-formyl-N(1)-(5-phospho-D-ribosyl)glycinamide: step 2/2. This chain is Phosphoribosylformylglycinamidine cyclo-ligase, found in Rhizobium leguminosarum bv. trifolii (strain WSM2304).